A 459-amino-acid polypeptide reads, in one-letter code: Glutamate--tRNA ligase 2 (459 aa).

Positions 8–18 match the 'HIGH' region motif; the sequence is PSPTGYIHIGN. The 'KMSKS' region motif lies at 249–253; the sequence is GLSKR. An ATP-binding site is contributed by Lys-252.

The protein belongs to the class-I aminoacyl-tRNA synthetase family. Glutamate--tRNA ligase type 1 subfamily. Monomer.

The protein localises to the cytoplasm. It catalyses the reaction tRNA(Glu) + L-glutamate + ATP = L-glutamyl-tRNA(Glu) + AMP + diphosphate. Its function is as follows. Catalyzes the attachment of glutamate to tRNA(Glu) in a two-step reaction: glutamate is first activated by ATP to form Glu-AMP and then transferred to the acceptor end of tRNA(Glu). This is Glutamate--tRNA ligase 2 from Bartonella henselae (strain ATCC 49882 / DSM 28221 / CCUG 30454 / Houston 1) (Rochalimaea henselae).